Here is a 160-residue protein sequence, read N- to C-terminus: Vegetative-specific protein V4 (160 aa).

3 repeat units span residues 151–153, 154–156, and 157–159. Residues 151 to 159 form a 3 X 3 AA tandem repeats of N-Q-[PG] region; it reads NQPNQPNQG.

Functionally, unknown. Its expression during growth is not required for growth but for the proper initiation of development, therefore playing a role in the transition from growth to development. The protein is Vegetative-specific protein V4 (lmcB) of Dictyostelium discoideum (Social amoeba).